We begin with the raw amino-acid sequence, 435 residues long: T-box transcription factor T (435 aa).

The segment at residues 51–219 (LWLRFKELTN…YNPFAKAFLD (169 aa)) is a DNA-binding region (T-box). Residues 279-308 (YPTLRSHRSSPYPSPYAHRNNSPTYSDNSP) are disordered. A compositionally biased stretch (polar residues) spans 297–308 (RNNSPTYSDNSP).

In terms of assembly, monomer. As to expression, detected in testis, but not in other, normal tissues. Detected in lung tumors (at protein level).

Its subcellular location is the nucleus. Its function is as follows. Involved in the transcriptional regulation of genes required for mesoderm formation and differentiation. Binds to a palindromic T site 5'-TTCACACCTAGGTGTGAA-3' DNA sequence and activates gene transcription when bound to such a site. The protein is T-box transcription factor T of Homo sapiens (Human).